Reading from the N-terminus, the 249-residue chain is Enolase-phosphatase E1 (249 aa).

Mg(2+)-binding residues include Asp15 and Glu17. Substrate contacts are provided by residues 146-147 (SS) and Lys180. Asp205 contacts Mg(2+).

The protein belongs to the HAD-like hydrolase superfamily. MasA/MtnC family. Monomer. Requires Mg(2+) as cofactor.

The protein localises to the cytoplasm. Its subcellular location is the nucleus. The catalysed reaction is 5-methylsulfanyl-2,3-dioxopentyl phosphate + H2O = 1,2-dihydroxy-5-(methylsulfanyl)pent-1-en-3-one + phosphate. Its pathway is amino-acid biosynthesis; L-methionine biosynthesis via salvage pathway; L-methionine from S-methyl-5-thio-alpha-D-ribose 1-phosphate: step 3/6. It functions in the pathway amino-acid biosynthesis; L-methionine biosynthesis via salvage pathway; L-methionine from S-methyl-5-thio-alpha-D-ribose 1-phosphate: step 4/6. Bifunctional enzyme that catalyzes the enolization of 2,3-diketo-5-methylthiopentyl-1-phosphate (DK-MTP-1-P) into the intermediate 2-hydroxy-3-keto-5-methylthiopentenyl-1-phosphate (HK-MTPenyl-1-P), which is then dephosphorylated to form the acireductone 1,2-dihydroxy-3-keto-5-methylthiopentene (DHK-MTPene). In Caenorhabditis briggsae, this protein is Enolase-phosphatase E1.